The primary structure comprises 207 residues: FMN-dependent NADH:quinone oxidoreductase 1 (207 aa).

Residues Ser-9, 15-17 (SIS), and 139-142 (TRGG) each bind FMN.

It belongs to the azoreductase type 1 family. In terms of assembly, homodimer. The cofactor is FMN.

It catalyses the reaction 2 a quinone + NADH + H(+) = 2 a 1,4-benzosemiquinone + NAD(+). The catalysed reaction is N,N-dimethyl-1,4-phenylenediamine + anthranilate + 2 NAD(+) = 2-(4-dimethylaminophenyl)diazenylbenzoate + 2 NADH + 2 H(+). Quinone reductase that provides resistance to thiol-specific stress caused by electrophilic quinones. Functionally, also exhibits azoreductase activity. Catalyzes the reductive cleavage of the azo bond in aromatic azo compounds to the corresponding amines. The polypeptide is FMN-dependent NADH:quinone oxidoreductase 1 (Trichormus variabilis (strain ATCC 29413 / PCC 7937) (Anabaena variabilis)).